The primary structure comprises 237 residues: Ribonuclease PH (237 aa).

Phosphate is bound by residues R86 and 124–126; that span reads GTR.

It belongs to the RNase PH family. Homohexameric ring arranged as a trimer of dimers.

It catalyses the reaction tRNA(n+1) + phosphate = tRNA(n) + a ribonucleoside 5'-diphosphate. In terms of biological role, phosphorolytic 3'-5' exoribonuclease that plays an important role in tRNA 3'-end maturation. Removes nucleotide residues following the 3'-CCA terminus of tRNAs; can also add nucleotides to the ends of RNA molecules by using nucleoside diphosphates as substrates, but this may not be physiologically important. Probably plays a role in initiation of 16S rRNA degradation (leading to ribosome degradation) during starvation. This chain is Ribonuclease PH, found in Rhodopseudomonas palustris (strain ATCC BAA-98 / CGA009).